Reading from the N-terminus, the 194-residue chain is Probable GTP-binding protein EngB (194 aa).

Positions 22 to 194 (DLPEYALAGR…AWQFIKEGME (173 aa)) constitute an EngB-type G domain. GTP contacts are provided by residues 30–37 (GRSNVGKS), 57–61 (GKTQT), 75–78 (DVPG), 142–145 (TKAD), and 174–176 (FSS). Serine 37 and threonine 59 together coordinate Mg(2+).

It belongs to the TRAFAC class TrmE-Era-EngA-EngB-Septin-like GTPase superfamily. EngB GTPase family. The cofactor is Mg(2+).

In terms of biological role, necessary for normal cell division and for the maintenance of normal septation. The protein is Probable GTP-binding protein EngB of Listeria innocua serovar 6a (strain ATCC BAA-680 / CLIP 11262).